We begin with the raw amino-acid sequence, 446 residues long: 3-phosphoshikimate 1-carboxyvinyltransferase (446 aa).

3-phosphoshikimate contacts are provided by lysine 27, serine 28, and arginine 32. Residue lysine 27 participates in phosphoenolpyruvate binding. Residues glycine 100 and arginine 128 each coordinate phosphoenolpyruvate. Positions 177, 179, 330, and 357 each coordinate 3-phosphoshikimate. Position 179 (glutamine 179) interacts with phosphoenolpyruvate. Aspartate 330 serves as the catalytic Proton acceptor. Residues arginine 361 and arginine 406 each contribute to the phosphoenolpyruvate site.

Belongs to the EPSP synthase family. Monomer.

The protein resides in the cytoplasm. The catalysed reaction is 3-phosphoshikimate + phosphoenolpyruvate = 5-O-(1-carboxyvinyl)-3-phosphoshikimate + phosphate. It functions in the pathway metabolic intermediate biosynthesis; chorismate biosynthesis; chorismate from D-erythrose 4-phosphate and phosphoenolpyruvate: step 6/7. Catalyzes the transfer of the enolpyruvyl moiety of phosphoenolpyruvate (PEP) to the 5-hydroxyl of shikimate-3-phosphate (S3P) to produce enolpyruvyl shikimate-3-phosphate and inorganic phosphate. This is 3-phosphoshikimate 1-carboxyvinyltransferase from Sphingopyxis alaskensis (strain DSM 13593 / LMG 18877 / RB2256) (Sphingomonas alaskensis).